The primary structure comprises 823 residues: DNA ligase (823 aa).

Residues 31-35 (DDAFD) and 73-74 (SQ) each bind NAD(+). Catalysis depends on K100, which acts as the N6-AMP-lysine intermediate. Positions 121, 163, 275, and 296 each coordinate NAD(+). Zn(2+) contacts are provided by C387, C390, C403, and C408. BRCT domains follow at residues 562–655 (QAES…TGET), 654–742 (ETVH…DAHV), and 741–823 (HVHA…TPGT).

Belongs to the NAD-dependent DNA ligase family. LigA subfamily. Mg(2+) is required as a cofactor. It depends on Mn(2+) as a cofactor.

The catalysed reaction is NAD(+) + (deoxyribonucleotide)n-3'-hydroxyl + 5'-phospho-(deoxyribonucleotide)m = (deoxyribonucleotide)n+m + AMP + beta-nicotinamide D-nucleotide.. Functionally, DNA ligase that catalyzes the formation of phosphodiester linkages between 5'-phosphoryl and 3'-hydroxyl groups in double-stranded DNA using NAD as a coenzyme and as the energy source for the reaction. It is essential for DNA replication and repair of damaged DNA. This is DNA ligase from Treponema pallidum (strain Nichols).